The following is a 469-amino-acid chain: Argininosuccinate lyase (469 aa).

Belongs to the lyase 1 family. Argininosuccinate lyase subfamily.

It localises to the cytoplasm. It catalyses the reaction 2-(N(omega)-L-arginino)succinate = fumarate + L-arginine. It functions in the pathway amino-acid biosynthesis; L-arginine biosynthesis; L-arginine from L-ornithine and carbamoyl phosphate: step 3/3. The polypeptide is Argininosuccinate lyase (Burkholderia vietnamiensis (strain G4 / LMG 22486) (Burkholderia cepacia (strain R1808))).